The primary structure comprises 677 residues: Methionine--tRNA ligase (677 aa).

A 'HIGH' region motif is present at residues 15–25 (PYANGSIHLGH). Residues Cys-146, Cys-149, Cys-159, and Cys-162 each contribute to the Zn(2+) site. A 'KMSKS' region motif is present at residues 333–337 (KMSKS). Residue Lys-336 coordinates ATP. The tRNA-binding domain occupies 575–677 (DFAKVDLRVA…DGAKPGQQVK (103 aa)).

It belongs to the class-I aminoacyl-tRNA synthetase family. MetG type 1 subfamily. Homodimer. The cofactor is Zn(2+).

Its subcellular location is the cytoplasm. The enzyme catalyses tRNA(Met) + L-methionine + ATP = L-methionyl-tRNA(Met) + AMP + diphosphate. Its function is as follows. Is required not only for elongation of protein synthesis but also for the initiation of all mRNA translation through initiator tRNA(fMet) aminoacylation. This chain is Methionine--tRNA ligase, found in Salmonella schwarzengrund (strain CVM19633).